The following is a 977-amino-acid chain: Pro-apoptotic serine protease NMA111 (977 aa).

The tract at residues 1–36 (MTIQAHKRTLSEVSTSSVGQLKRREGYTEDYTDEGS) is disordered. Residues 64-254 (VVSVHFAQVA…LPLDRILRAL (191 aa)) form a serine protease region. Residues His102, Asp133, and Ser216 each act as charge relay system in the active site. PDZ domains lie at 271-356 (QWLL…LVVQ) and 749-835 (SVLQ…VRKG).

The protein belongs to the peptidase S1C family.

It localises to the nucleus. Its function is as follows. Nuclear serine protease which mediates apoptosis. The protein is Pro-apoptotic serine protease NMA111 (NMA111) of Eremothecium gossypii (strain ATCC 10895 / CBS 109.51 / FGSC 9923 / NRRL Y-1056) (Yeast).